The following is a 500-amino-acid chain: MGLLIGDDLWAVVIFTAIFLLLVDLVHRHKFWTAHYPPGPVPLPGLGNLLQVDFENMPYSLYKLRSRYGDVFSLQIAWKPVVVINGLKAVRELLVTYGEDTADRPLLPIYNHLGYGNKSKGVVLAPYGPEWREQRRFSVSTLRDFGVGKKSLEQWVTEEAGHLCDTFAKEAEHPFNPSILLSKAVSNVIASLVYARRFEYEDPFFNRMLKTLKESFGEDTGFMAEVLNAIPILLQIPGLPGKVFPKLNSFIALVDKMLIEHKKSWDPAQPPRDMTDAFLAEMQKAKGNPESSFNDENLRLVVIDLFMAGMVTTSTTLSWALLLMILHPDVQRRVHEEIDEVIGQVRRPEMADQARMPFTNAVIHEVQRFADIVPTNIPHMTSRDIKFQGFLIPKGTTLIPNLSSVLKDETVWEKPLRFHPEHFLDAQGNFVKHEAFMPFSAGRRACLGEPLARMELFLFFTCLLQRFSFSVLAGRPRPSTHGVYALPVTPQPYQLCAVAR.

Phosphoserine is present on S249. C446 contacts heme.

Belongs to the cytochrome P450 family. It depends on heme as a cofactor.

It is found in the endoplasmic reticulum membrane. Its subcellular location is the microsome membrane. It catalyses the reaction an organic molecule + reduced [NADPH--hemoprotein reductase] + O2 = an alcohol + oxidized [NADPH--hemoprotein reductase] + H2O + H(+). Cytochromes P450 are a group of heme-thiolate monooxygenases. In liver microsomes, this enzyme is involved in an NADPH-dependent electron transport pathway. It oxidizes a variety of structurally unrelated compounds, including steroids, fatty acids, and xenobiotics. This chain is Cytochrome P450 2D26 (Cyp2d26), found in Rattus norvegicus (Rat).